Here is a 131-residue protein sequence, read N- to C-terminus: Small ribosomal subunit protein uS11 (131 aa).

Belongs to the universal ribosomal protein uS11 family. As to quaternary structure, part of the 30S ribosomal subunit. Interacts with proteins S7 and S18. Binds to IF-3. Interacts with VmlR. Interacts with BrxC.

In terms of biological role, located on the platform of the 30S subunit, it bridges several disparate RNA helices of the 16S rRNA. Forms part of the Shine-Dalgarno cleft in the 70S ribosome. This chain is Small ribosomal subunit protein uS11, found in Bacillus subtilis (strain 168).